The sequence spans 368 residues: Flagellar P-ring protein (368 aa).

An N-terminal signal peptide occupies residues 1-24 (MNSIFRKIVFAAFLLLALPQFALA).

It belongs to the FlgI family. In terms of assembly, the basal body constitutes a major portion of the flagellar organelle and consists of four rings (L,P,S, and M) mounted on a central rod.

Its subcellular location is the periplasm. The protein localises to the bacterial flagellum basal body. Its function is as follows. Assembles around the rod to form the L-ring and probably protects the motor/basal body from shearing forces during rotation. The protein is Flagellar P-ring protein of Geotalea uraniireducens (strain Rf4) (Geobacter uraniireducens).